The following is a 291-amino-acid chain: Protease HtpX (291 aa).

Transmembrane regions (helical) follow at residues 4 to 24 (ILLFLATNLAVLVIASITLKL) and 36 to 56 (GSLLVFCAVFGFAGSLVSLFI). His-142 is a binding site for Zn(2+). The active site involves Glu-143. Residue His-146 coordinates Zn(2+). Helical transmembrane passes span 150–170 (GDMVTLALIQGVVNTFVMFFA) and 193–213 (FVATIFAELVLGILASIIVMW). Glu-219 provides a ligand contact to Zn(2+).

The protein belongs to the peptidase M48B family. Requires Zn(2+) as cofactor.

Its subcellular location is the cell inner membrane. This Pseudomonas aeruginosa (strain LESB58) protein is Protease HtpX.